The sequence spans 685 residues: Class E vacuolar protein-sorting machinery protein HSE1 (685 aa).

In terms of domain architecture, VHS spans 18 to 148 (ATDENLTTEN…ELSRKKPDLK (131 aa)). Over residues 144 to 166 (KPDLKAPAKPEKHKITEQERQRE) the composition is skewed to basic and acidic residues. Disordered regions lie at residues 144–168 (KPDL…REEE) and 182–247 (NTSG…DPTP). The 20-residue stretch at 165–184 (REEEELQMVLALSLSETNTS) folds into the UIM domain. The span at 182–206 (NTSGSFQQHHQTNSQIQPPVNNSHF) shows a compositional bias: polar residues. Residues 212-241 (QQQQQQQQQHNQQDYGQQSNNANTNNNAPA) show a composition bias toward low complexity. The region spanning 250–309 (ATVSRVKALYDLNATEPGELSFRKGDIITVLESVFRDWWRGSLRGQVGIFPLNYVMPIAE) is the SH3 domain. Low complexity-rich tracts occupy residues 432–448 (AQGA…TPGT) and 457–498 (PQQQ…PVHQ). Positions 432-685 (AQGAPAGYPG…AGPPPSNFYE (254 aa)) are disordered. Residues 499–522 (YDNTQAHGRQGSTDSGRSQRMYSQ) show a composition bias toward polar residues. Gly residues-rich tracts occupy residues 539–553 (GGSG…GGGA) and 562–572 (GGAGGPGGPGG). Low complexity-rich tracts occupy residues 574–584 (SAPSGAHSGAP) and 591–604 (APAA…GSPS). Residues 627–645 (INGTPTSNLGQQSPVTSQS) are compositionally biased toward polar residues. The span at 646-658 (IPIPNNNNLAAPP) shows a compositional bias: low complexity. Positions 668–685 (SPPPPVPNAGPPPSNFYE) are enriched in pro residues.

The protein belongs to the STAM family. In terms of assembly, component of the ESCRT-0 complex composed of HSE1 and VPS27.

The protein localises to the endosome membrane. Its function is as follows. Component of the ESCRT-0 complex which is the sorting receptor for ubiquitinated cargo proteins at the multivesicular body (MVB). The protein is Class E vacuolar protein-sorting machinery protein HSE1 (HSE1) of Yarrowia lipolytica (strain CLIB 122 / E 150) (Yeast).